We begin with the raw amino-acid sequence, 339 residues long: Adenylosuccinate synthetase (339 aa).

Residues 12–18 (GDEGKGS) and 42–44 (GHS) each bind GTP. The Proton acceptor role is filled by Asp13. The Mg(2+) site is built by Asp13 and Gly42. IMP contacts are provided by residues 13–16 (DEGK), 40–43 (NAGH), Thr127, Arg141, Gln179, Thr194, and Arg256. His43 functions as the Proton donor in the catalytic mechanism. Residue 252–258 (TVTGRRR) participates in substrate binding. GTP is bound by residues Arg258, 284 to 286 (MLD), and 324 to 326 (KTG).

Belongs to the adenylosuccinate synthetase family. In terms of assembly, homodimer. It depends on Mg(2+) as a cofactor.

It localises to the cytoplasm. The enzyme catalyses IMP + L-aspartate + GTP = N(6)-(1,2-dicarboxyethyl)-AMP + GDP + phosphate + 2 H(+). It functions in the pathway purine metabolism; AMP biosynthesis via de novo pathway; AMP from IMP: step 1/2. In terms of biological role, plays an important role in the de novo pathway of purine nucleotide biosynthesis. Catalyzes the first committed step in the biosynthesis of AMP from IMP. This chain is Adenylosuccinate synthetase, found in Pyrococcus sp. (strain ST700).